Here is a 209-residue protein sequence, read N- to C-terminus: Yop proteins translocation protein K (209 aa).

Its function is as follows. Belongs to an operon involved in the translocation of Yop proteins across the bacterial membranes or in the specific control of this function. This chain is Yop proteins translocation protein K (yscK), found in Yersinia enterocolitica.